A 504-amino-acid chain; its full sequence is Flavin-dependent halogenase armH3 (504 aa).

FAD contacts are provided by glycine 16, alanine 19, glutamate 49, and alanine 149. Chloride contacts are provided by serine 329 and glycine 330. Position 331 (isoleucine 331) interacts with FAD. A disordered region spans residues asparagine 444 to methionine 475.

The protein belongs to the flavin-dependent halogenase family.

The catalysed reaction is melleolide F + FADH2 + chloride + O2 = 6'-chloromelleolide F + FAD + 2 H2O + H(+). Its function is as follows. Flavin-dependent halogenase involved in the biosynthesis of melleolides, a range of antifungal and phytotoxic polyketide derivatives composed of an orsellinic acid (OA) moiety esterified to various sesquiterpene alcohols. The halogenase catalyzes the transfer of a single chlorine atom to the melleolide backbone, resulting in a 6'-chloromelleolide product. The enzyme acts on free substrate and does not depend on carrier-protein-dependent acceptor molecules. The polypeptide is Flavin-dependent halogenase armH3 (Armillaria mellea (Honey mushroom)).